Consider the following 465-residue polypeptide: Botryococcus squalene synthase (465 aa).

Residues R48 and R73 each coordinate NADP(+). 3 residues coordinate Mg(2+): D76, E79, and D80. Positions 215, 315, and 317 each coordinate NADP(+). The next 2 helical transmembrane spans lie at 395 to 415 (AIRL…FNLG) and 429 to 449 (ILDL…LLVL).

This sequence belongs to the phytoene/squalene synthase family.

It is found in the membrane. The catalysed reaction is presqualene diphosphate + NADPH + H(+) = squalene + diphosphate + NADP(+). Its function is as follows. Produces squalene when coexpressed with SSL-1 and bisfarnesyl ether and a very small amount of squalene when incubated alone in the presence of NADPH. The chain is Botryococcus squalene synthase (SSL-2) from Botryococcus braunii (Green alga).